The primary structure comprises 590 residues: Glutamine--fructose-6-phosphate aminotransferase [isomerizing] (590 aa).

The Nucleophile; for GATase activity role is filled by Cys-2. A Glutamine amidotransferase type-2 domain is found at Cys-2 to Asp-219. 2 consecutive SIS domains span residues Val-277–Met-415 and Leu-438–Pro-580. Lys-585 acts as the For Fru-6P isomerization activity in catalysis.

Homodimer.

The protein localises to the cytoplasm. The catalysed reaction is D-fructose 6-phosphate + L-glutamine = D-glucosamine 6-phosphate + L-glutamate. Its function is as follows. Catalyzes the first step in hexosamine metabolism, converting fructose-6P into glucosamine-6P using glutamine as a nitrogen source. In Methanothermobacter thermautotrophicus (strain ATCC 29096 / DSM 1053 / JCM 10044 / NBRC 100330 / Delta H) (Methanobacterium thermoautotrophicum), this protein is Glutamine--fructose-6-phosphate aminotransferase [isomerizing].